The primary structure comprises 34 residues: Photosystem II reaction center protein M (34 aa).

A helical transmembrane segment spans residues 5–25 (ILAFIATALFILVPTAFLLII).

The protein belongs to the PsbM family. As to quaternary structure, PSII is composed of 1 copy each of membrane proteins PsbA, PsbB, PsbC, PsbD, PsbE, PsbF, PsbH, PsbI, PsbJ, PsbK, PsbL, PsbM, PsbT, PsbX, PsbY, PsbZ, Psb30/Ycf12, at least 3 peripheral proteins of the oxygen-evolving complex and a large number of cofactors. It forms dimeric complexes.

The protein resides in the plastid. The protein localises to the chloroplast thylakoid membrane. One of the components of the core complex of photosystem II (PSII). PSII is a light-driven water:plastoquinone oxidoreductase that uses light energy to abstract electrons from H(2)O, generating O(2) and a proton gradient subsequently used for ATP formation. It consists of a core antenna complex that captures photons, and an electron transfer chain that converts photonic excitation into a charge separation. This subunit is found at the monomer-monomer interface. This Buxus microphylla (Littleleaf boxwood) protein is Photosystem II reaction center protein M.